We begin with the raw amino-acid sequence, 875 residues long: Ectonucleotide pyrophosphatase/phosphodiesterase family member 3 (875 aa).

The Cytoplasmic segment spans residues 1–11 (MDSRLALATEE). Residues 12–30 (PIKKDSLKRYKILCAVLLA) form a helical; Signal-anchor for type II membrane protein membrane-spanning segment. Residues 31–875 (LLVIVSLGLG…TYLPTFETII (845 aa)) are Extracellular-facing. SMB domains follow at residues 51-94 (HIGS…VKST) and 95-139 (QIWT…GEVP). 10 disulfide bridges follow: Cys55–Cys72, Cys59–Cys90, Cys70–Cys83, Cys76–Cys82, Cys99–Cys116, Cys104–Cys134, Cys114–Cys127, Cys120–Cys126, Cys145–Cys191, and Cys153–Cys365. The short motif at 79–81 (RGD) is the Cell attachment site element. Residues 161–545 (PVILFSMDGF…HGSLNHLLKA (385 aa)) form a phosphodiesterase region. A Zn(2+)-binding site is contributed by Asp168. Residue Lys205 coordinates ATP. Position 206 (Thr206) interacts with Zn(2+). The active-site Nucleophile is the Thr206. Asn227 provides a ligand contact to ATP. Asn237 carries N-linked (GlcNAc...) asparagine glycosylation. Residue Asp276 participates in ATP binding. N-linked (GlcNAc...) asparagine glycosylation is found at Asn280 and Asn289. Tyr290 is an ATP binding site. 4 residues coordinate Zn(2+): Asp326, His330, Asp373, and His374. Cystine bridges form between Cys381–Cys478, Cys429–Cys818, Cys562–Cys623, Cys575–Cys679, Cys577–Cys664, and Cys787–Cys797. His483 contacts Zn(2+). Residues Asn533, Asn574, Asn594, and Asn702 are each glycosylated (N-linked (GlcNAc...) asparagine). The tract at residues 582–875 (TSGQEEQVNQ…TYLPTFETII (294 aa)) is nuclease. Residues Asp752, Asn754, Asp756, His758, and Asp760 each contribute to the Ca(2+) site. N-linked (GlcNAc...) asparagine glycosylation occurs at Asn789.

The protein belongs to the nucleotide pyrophosphatase/phosphodiesterase family. Monomer and homodimer. Requires Zn(2+) as cofactor. Post-translationally, the N-terminal is blocked. In terms of processing, N-glycosylated. N-glycosylation is necessary for normal transport to the cell membrane, but is not the apical targeting signal. Detected in intestinal epithelium and liver (at protein level).

The protein localises to the cell membrane. The protein resides in the apical cell membrane. It localises to the secreted. It carries out the reaction Hydrolytically removes 5'-nucleotides successively from the 3'-hydroxy termini of 3'-hydroxy-terminated oligonucleotides.. The catalysed reaction is a ribonucleoside 5'-triphosphate + H2O = a ribonucleoside 5'-phosphate + diphosphate + H(+). The enzyme catalyses ATP + H2O = AMP + diphosphate + H(+). It catalyses the reaction CTP + H2O = CMP + diphosphate + H(+). It carries out the reaction GTP + H2O = GMP + diphosphate + H(+). The catalysed reaction is UTP + H2O = UMP + diphosphate + H(+). The enzyme catalyses UDP-N-acetyl-alpha-D-glucosamine + H2O = N-acetyl-alpha-D-glucosamine 1-phosphate + UMP + 2 H(+). It catalyses the reaction P(1),P(3)-bis(5'-adenosyl) triphosphate + H2O = AMP + ADP + 2 H(+). It carries out the reaction P(1),P(4)-bis(5'-adenosyl) tetraphosphate + H2O = AMP + ATP + 2 H(+). The catalysed reaction is P(1),P(5)-bis(5'-adenosyl) pentaphosphate + H2O = adenosine 5'-tetraphosphate + AMP + 2 H(+). The enzyme catalyses P(1),P(4)-bis(5'-guanosyl) tetraphosphate + H2O = GMP + GTP + 2 H(+). Hydrolase that metabolizes extracellular nucleotides, including ATP, GTP, UTP and CTP. Limits mast cells and basophils response during inflammation and during the chronic phases of allergic responses by eliminating extracellular ATP, a signaling molecule activating these cells in an autocrine manner. Metabolizes extracellular ATP in the lumen of the small intestine, and thereby prevents ATP-induced apoptosis of intestinal plasmacytoid dendritic cells. Has a broad specificity and can also hydrolyze UDP-GlcNAc into UMP and GlcNAc-1-phosphate and potentially several other intracellular nucleotide sugars, including UDP-GalNAc, CMP-NeuAc, GDP-Fuc, and UDP-GlcA. Thereby, could modulate glycan biosynthesis and protein glycosylation. Can hydrolyze extracellular dinucleoside polyphosphates, including the vasoactive adenosine polyphosphates as well. In addition, displays an alkaline phosphodiesterase activity in vitro. The chain is Ectonucleotide pyrophosphatase/phosphodiesterase family member 3 from Rattus norvegicus (Rat).